Consider the following 235-residue polypeptide: Large ribosomal subunit protein uL1 (235 aa).

This sequence belongs to the universal ribosomal protein uL1 family. As to quaternary structure, part of the 50S ribosomal subunit.

Functionally, binds directly to 23S rRNA. The L1 stalk is quite mobile in the ribosome, and is involved in E site tRNA release. Its function is as follows. Protein L1 is also a translational repressor protein, it controls the translation of the L11 operon by binding to its mRNA. The sequence is that of Large ribosomal subunit protein uL1 from Synechococcus sp. (strain CC9605).